A 178-amino-acid polypeptide reads, in one-letter code: Nucleolar protein 16 (178 aa).

Residues 1-31 (MPKAKGKTRRQKFGYSVNRKRLNRNARRKAA) form a disordered region. At T8 the chain carries Phosphothreonine. S16 is subject to Phosphoserine. K74 participates in a covalent cross-link: Glycyl lysine isopeptide (Lys-Gly) (interchain with G-Cter in SUMO2). K90 carries the N6-acetyllysine modification. At T144 the chain carries Phosphothreonine. Glycyl lysine isopeptide (Lys-Gly) (interchain with G-Cter in SUMO2) cross-links involve residues F166, L167, K172, and R173.

It belongs to the NOP16 family.

It is found in the nucleus. The protein localises to the nucleolus. This is Nucleolar protein 16 (NOP16) from Homo sapiens (Human).